Here is a 602-residue protein sequence, read N- to C-terminus: Elongation factor 4 (602 aa).

A tr-type G domain is found at 8–189 (KNIRNFSIIA…KIITTIPAPS (182 aa)). GTP-binding positions include 20 to 25 (DHGKST) and 136 to 139 (NKID).

This sequence belongs to the TRAFAC class translation factor GTPase superfamily. Classic translation factor GTPase family. LepA subfamily.

It localises to the cell inner membrane. It carries out the reaction GTP + H2O = GDP + phosphate + H(+). Functionally, required for accurate and efficient protein synthesis under certain stress conditions. May act as a fidelity factor of the translation reaction, by catalyzing a one-codon backward translocation of tRNAs on improperly translocated ribosomes. Back-translocation proceeds from a post-translocation (POST) complex to a pre-translocation (PRE) complex, thus giving elongation factor G a second chance to translocate the tRNAs correctly. Binds to ribosomes in a GTP-dependent manner. The chain is Elongation factor 4 from Helicobacter pylori (strain Shi470).